Consider the following 237-residue polypeptide: Protein ULTRAPETALA 1 (237 aa).

The SAND domain occupies 18-116; sequence EELQEMSGVN…SKTVLLKYYN (99 aa). The segment at 133-191 adopts a CW-type zinc-finger fold; sequence VCHRDEFVGCNDCGKERRFRLRSRDECRLHHNAMGDPNWKCSDFPYDKITCEEEEERGS.

As to quaternary structure, interacts with HHO5. Associates with ATX1 for trimethylating 'Lys-4' on histone H3 (H3K4me3) at flower MADS box gene loci. Expressed at low levels in seedlings, roots, shoots, leaves, stems, inflorescences, pollen, flowers and siliques, with highest levels dividing tissues including inflorescence.

Its subcellular location is the cytoplasm. It is found in the nucleus. Putative transcription factor that acts as a key negative regulator of cell accumulation in shoot and floral meristems. Negatively regulates the size of the WUSCHEL (WUS)-expressing organizing center in inflorescence meristems. May act by down-regulating expression of WUS. Acts as an antirepressor that counteracts EMF1 action through modulation of trimethylated 'Lys-4' on histone H3 (H3K4me3) marks on target gene loci (including genes involved in salt stress response and flower development). Collaboratively with RBL and CYP40/SQN, influences floral meristem (FM) determinacy in an AGAMOUS and SUPERMAN-dependent manner, thus contributing to the floral developmental homeostasis. This is Protein ULTRAPETALA 1 from Arabidopsis thaliana (Mouse-ear cress).